The sequence spans 494 residues: 4-trimethylaminobutyraldehyde dehydrogenase (494 aa).

N-acetylserine is present on Ser-2. At Lys-30 the chain carries N6-acetyllysine; alternate. Lys-30 is modified (N6-succinyllysine; alternate). Lys-59 carries the N6-succinyllysine modification. NAD(+) is bound by residues Lys-180 and 232–236; that span reads GSVPT. Glu-254 acts as the Proton acceptor in catalysis. Residue Cys-288 is the Nucleophile of the active site. Lys-298 and Lys-344 each carry N6-acetyllysine. Position 391 (Glu-391) interacts with NAD(+).

Belongs to the aldehyde dehydrogenase family. Homotetramer.

It localises to the cytoplasm. It is found in the cytosol. The catalysed reaction is 4-(trimethylamino)butanal + NAD(+) + H2O = 4-(trimethylamino)butanoate + NADH + 2 H(+). It catalyses the reaction an aldehyde + NAD(+) + H2O = a carboxylate + NADH + 2 H(+). The enzyme catalyses 4-aminobutanal + NAD(+) + H2O = 4-aminobutanoate + NADH + 2 H(+). It carries out the reaction formaldehyde + NAD(+) + H2O = formate + NADH + 2 H(+). The catalysed reaction is acetaldehyde + NAD(+) + H2O = acetate + NADH + 2 H(+). It catalyses the reaction imidazole-4-acetaldehyde + NAD(+) + H2O = imidazole-4-acetate + NADH + 2 H(+). The enzyme catalyses acrolein + NAD(+) + H2O = acrylate + NADH + 2 H(+). It carries out the reaction (5-hydroxyindol-3-yl)acetaldehyde + NAD(+) + H2O = (5-hydroxyindol-3-yl)acetate + NADH + 2 H(+). The catalysed reaction is 3,4-dihydroxyphenylacetaldehyde + NAD(+) + H2O = 3,4-dihydroxyphenylacetate + NADH + 2 H(+). It catalyses the reaction spermine monoaldehyde + NAD(+) + H2O = N-(2-carboxyethyl)spermidine + NADH + 2 H(+). The enzyme catalyses propanal + NAD(+) + H2O = propanoate + NADH + 2 H(+). It carries out the reaction butanal + NAD(+) + H2O = butanoate + NADH + 2 H(+). The catalysed reaction is pentanal + NAD(+) + H2O = pentanoate + NADH + 2 H(+). It catalyses the reaction hexanal + NAD(+) + H2O = hexanoate + NADH + 2 H(+). It functions in the pathway amine and polyamine biosynthesis; carnitine biosynthesis. In terms of biological role, converts gamma-trimethylaminobutyraldehyde into gamma-butyrobetaine with high efficiency (in vitro). Can catalyze the irreversible oxidation of a broad range of aldehydes to the corresponding acids in an NAD-dependent reaction, but with low efficiency. Catalyzes the oxidation of aldehydes arising from biogenic amines and polyamines. The chain is 4-trimethylaminobutyraldehyde dehydrogenase (ALDH9A1) from Bos taurus (Bovine).